The following is a 118-amino-acid chain: Non-specific lipid-transfer protein 1 (118 aa).

An N-terminal signal peptide occupies residues 1–20; it reads MARLAVAIAVVAAVVVVLAA. 4 cysteine pairs are disulfide-bonded: C29/C77, C39/C54, C55/C100, and C75/C114.

This sequence belongs to the plant LTP family.

In terms of biological role, plant non-specific lipid-transfer proteins transfer phospholipids as well as galactolipids across membranes. May play a role in wax or cutin deposition in the cell walls of expanding epidermal cells and certain secretory tissues. This chain is Non-specific lipid-transfer protein 1 (LTP1), found in Sorghum bicolor (Sorghum).